A 300-amino-acid chain; its full sequence is Cell surface glycoprotein CD200 receptor 1-A (300 aa).

The N-terminal stretch at 1–24 (MEIAGKAVCVFLLLAIIKLRRSEG) is a signal peptide. Positions 25–124 (INRVSANLGH…GNFHRLYHLT (100 aa)) constitute an Ig-like V-type domain. The Extracellular portion of the chain corresponds to 25-213 (INRVSANLGH…SINCSSSYRD (189 aa)). 2 cysteine pairs are disulfide-bonded: Cys40–Cys108 and Cys143–Cys192. Residues Asn45, Asn76, Asn105, Asn171, Asn200, and Asn206 are each glycosylated (N-linked (GlcNAc...) asparagine). An Ig-like C2-type domain is found at 122–206 (HLTVIVAPRM…ATLNETKSIN (85 aa)). A helical membrane pass occupies residues 214–234 (LILCIAIILSFLIIITFMAVI). Topologically, residues 235–300 (YYLKLHGCRF…NLPQGQSPAT (66 aa)) are cytoplasmic.

Belongs to the CD200R family. Glycosylated. In terms of processing, phosphorylated. As to expression, highly expressed in macrophages, peripheral blood lymphocytes (PBL) and peripheral blood mononuclear cells (PBMC). Weakly expressed in bursa, thymus, spleen, liver and brain.

Its subcellular location is the membrane. The protein resides in the secreted. This chain is Cell surface glycoprotein CD200 receptor 1-A (CD200R1A), found in Gallus gallus (Chicken).